The sequence spans 154 residues: Mating pheromone 2 (154 aa).

A signal peptide spans 1-16 (MKAIFIILAILMVTQA). Positions 17–52 (FKMTSKVNTKLQSQIQSKFQSKNKLASTFQTSSQLK) are excised as a propeptide.

The protein localises to the secreted. Its function is as follows. Mating ciliate pheromones (or gamones) are diffusible extracellular communication signals that distinguish different intraspecific classes of cells commonly referred to as 'mating types'. They prepare the latter for conjugation by changing their cell surface properties. The polypeptide is Mating pheromone 2 (Euplotoides octocarinatus (Freshwater ciliate)).